The chain runs to 118 residues: Large ribosomal subunit protein bL19 (118 aa).

The protein belongs to the bacterial ribosomal protein bL19 family.

Its function is as follows. This protein is located at the 30S-50S ribosomal subunit interface and may play a role in the structure and function of the aminoacyl-tRNA binding site. The sequence is that of Large ribosomal subunit protein bL19 from Parafrankia sp. (strain EAN1pec).